The primary structure comprises 509 residues: ATP synthase subunit alpha (509 aa).

169–176 is a binding site for ATP; it reads GDRQTGKT.

This sequence belongs to the ATPase alpha/beta chains family. F-type ATPases have 2 components, CF(1) - the catalytic core - and CF(0) - the membrane proton channel. CF(1) has five subunits: alpha(3), beta(3), gamma(1), delta(1), epsilon(1). CF(0) has three main subunits: a(1), b(2) and c(9-12). The alpha and beta chains form an alternating ring which encloses part of the gamma chain. CF(1) is attached to CF(0) by a central stalk formed by the gamma and epsilon chains, while a peripheral stalk is formed by the delta and b chains.

It is found in the cell inner membrane. The catalysed reaction is ATP + H2O + 4 H(+)(in) = ADP + phosphate + 5 H(+)(out). Its function is as follows. Produces ATP from ADP in the presence of a proton gradient across the membrane. The alpha chain is a regulatory subunit. The polypeptide is ATP synthase subunit alpha (Mesorhizobium japonicum (strain LMG 29417 / CECT 9101 / MAFF 303099) (Mesorhizobium loti (strain MAFF 303099))).